Consider the following 802-residue polypeptide: MANTKKTTLDITGMTCAACSNRIEKKLNKLDDVNAQVNLTTEKATVEYNPDQHDVQEFINTIQHLGYGVAVETVELDITGMTCAACSSRIEKVLNKMDGVQNATVNLTTEQAKVDYYPEETDADKLVTRIQKLGYDASIKDNNKDQTSRKAEALQHKLIKLIISAVLSLPLLMLMFVHLFNMHIPALFTNPWFQFILATPVQFIIGWQFYVGAYKNLRNGGANMDVLVAVGTSAAYFYSIYEMIRWLNGSTTQPHLYFETSAVLITLILFGKYLEARAKSQTTNALGELLSLQAKEARILKDGNELMIPLNEVHVGDTLIVKPGEKIPVDGKIIKGMTAIDESMLTGESIPVEKNVDDTVIGSTMNKNGTITMTATKVGGDTALANIIKVVEEAQSSKAPIQRLADIISGYFVPIVVGIALLTFIVWITLVTPGTFEPALVASISVLVIACPCALGLATPTSIMVGTGRAAENGILFKGGEFVERTHQIDTIVLDKTGTITNGRPVVTDYHGDDQTLQLLATAEKDSEHPLAEAIVNYAKEKQLTLTETTTFKAVPGHGIEATIDHHHILVGNRKLMADNDISLPKHISDDLTHYERDGKTAMLIAVNYSLTGIIAVADTLKNHAKDAIKQLHDMGIEVAMLTGDNKNTAQAIAKQVGIDTVIADILPEEKAAQIAKLQQQGKKVAMVGDGVNDAPALVKADIGIAIGTGTEVAIEAAGITILGGDLMLIPKAIYASKATIRNIRQNLFWAFGYNIAGIPIAALGLLAPWVAGAAMALSSVSVVTNALRLKKMRLEPRRKDA.

HMA domains follow at residues 5-70 (KKTT…YGVA) and 72-138 (ETVE…YDAS). 4 residues coordinate Cu(+): cysteine 16, cysteine 19, cysteine 83, and cysteine 86. Helical transmembrane passes span 161-181 (LIIS…HLFN), 192-212 (WFQF…FYVG), 224-244 (MDVL…YEMI), 256-276 (LYFE…YLEA), 411-431 (YFVP…ITLV), and 438-458 (PALV…LGLA). The 4-aspartylphosphate intermediate role is filled by aspartate 495. Mg(2+) contacts are provided by aspartate 690 and aspartate 694. A run of 2 helical transmembrane segments spans residues 748-767 (LFWA…LGLL) and 771-790 (VAGA…ALRL).

This sequence belongs to the cation transport ATPase (P-type) (TC 3.A.3) family. Type IB subfamily.

The protein localises to the cell membrane. It carries out the reaction Cu(+)(in) + ATP + H2O = Cu(+)(out) + ADP + phosphate + H(+). Involved in copper export. This chain is Copper-exporting P-type ATPase (copA), found in Staphylococcus aureus (strain bovine RF122 / ET3-1).